Here is a 148-residue protein sequence, read N- to C-terminus: Fluoride-specific ion channel FluC 2 (148 aa).

4 helical membrane passes run 23-43 (LGHL…RLAV), 61-81 (GTLA…TLIF), 92-112 (FWVL…LHTL), and 120-140 (LLGG…ALAG). The Na(+) site is built by Gly-99 and Thr-102.

Belongs to the fluoride channel Fluc/FEX (TC 1.A.43) family.

The protein localises to the cell membrane. The enzyme catalyses fluoride(in) = fluoride(out). Its activity is regulated as follows. Na(+) is not transported, but it plays an essential structural role and its presence is essential for fluoride channel function. Functionally, fluoride-specific ion channel. Important for reducing fluoride concentration in the cell, thus reducing its toxicity. The sequence is that of Fluoride-specific ion channel FluC 2 from Rubrobacter xylanophilus (strain DSM 9941 / JCM 11954 / NBRC 16129 / PRD-1).